The sequence spans 206 residues: Large ribosomal subunit protein uL4 (206 aa).

The disordered stretch occupies residues Ala-43–Ser-78. Residues Lys-49–His-58 are compositionally biased toward basic and acidic residues. Basic residues predominate over residues Thr-59–Gly-70.

The protein belongs to the universal ribosomal protein uL4 family. Part of the 50S ribosomal subunit.

One of the primary rRNA binding proteins, this protein initially binds near the 5'-end of the 23S rRNA. It is important during the early stages of 50S assembly. It makes multiple contacts with different domains of the 23S rRNA in the assembled 50S subunit and ribosome. Its function is as follows. Forms part of the polypeptide exit tunnel. This Cupriavidus metallidurans (strain ATCC 43123 / DSM 2839 / NBRC 102507 / CH34) (Ralstonia metallidurans) protein is Large ribosomal subunit protein uL4.